The chain runs to 131 residues: Fimbrial assembly protein, serogroups C1 and C2 (131 aa).

The protein is Fimbrial assembly protein, serogroups C1 and C2 (fimB) of Dichelobacter nodosus (Bacteroides nodosus).